We begin with the raw amino-acid sequence, 1242 residues long: DNA-directed RNA polymerase RPB2 homolog (1242 aa).

The C4-type zinc finger occupies C1180–C1201.

The protein belongs to the RNA polymerase beta chain family. As to quaternary structure, part of the viral DNA-directed RNA polymerase that consists of 8 polII-like subunits (RPB1, RPB2, RPB3, RPB5, RPB6, RPB7, RPB9, RPB10), a capping enzyme and a termination factor.

The protein resides in the host cytoplasm. It is found in the virion. The enzyme catalyses RNA(n) + a ribonucleoside 5'-triphosphate = RNA(n+1) + diphosphate. Catalytic component of the DNA-directed RNA polymerase (RNAP) that catalyzes the transcription in the cytoplasm of viral DNA into RNA using the four ribonucleoside triphosphates as substrates. Forms the polymerase active center together with RPB1. Part of the core element with the central large cleft, the clamp element that moves to open and close the cleft and the jaws that are thought to grab the incoming DNA template. The sequence is that of DNA-directed RNA polymerase RPB2 homolog from African swine fever virus (isolate Pig/Kenya/KEN-50/1950) (ASFV).